A 298-amino-acid polypeptide reads, in one-letter code: ATP phosphoribosyltransferase (298 aa).

Belongs to the ATP phosphoribosyltransferase family. Long subfamily. Requires Mg(2+) as cofactor.

Its subcellular location is the cytoplasm. It catalyses the reaction 1-(5-phospho-beta-D-ribosyl)-ATP + diphosphate = 5-phospho-alpha-D-ribose 1-diphosphate + ATP. It functions in the pathway amino-acid biosynthesis; L-histidine biosynthesis; L-histidine from 5-phospho-alpha-D-ribose 1-diphosphate: step 1/9. Feedback inhibited by histidine. Its function is as follows. Catalyzes the condensation of ATP and 5-phosphoribose 1-diphosphate to form N'-(5'-phosphoribosyl)-ATP (PR-ATP). Has a crucial role in the pathway because the rate of histidine biosynthesis seems to be controlled primarily by regulation of HisG enzymatic activity. This Aeromonas salmonicida (strain A449) protein is ATP phosphoribosyltransferase.